Reading from the N-terminus, the 258-residue chain is Indole-3-glycerol phosphate synthase (258 aa).

Belongs to the TrpC family.

It catalyses the reaction 1-(2-carboxyphenylamino)-1-deoxy-D-ribulose 5-phosphate + H(+) = (1S,2R)-1-C-(indol-3-yl)glycerol 3-phosphate + CO2 + H2O. The protein operates within amino-acid biosynthesis; L-tryptophan biosynthesis; L-tryptophan from chorismate: step 4/5. This is Indole-3-glycerol phosphate synthase from Geobacillus kaustophilus (strain HTA426).